The chain runs to 428 residues: GTPase Obg (428 aa).

In terms of domain architecture, Obg spans 1 to 158 (MFIDTAKIFV…RWVALELKLL (158 aa)). The region spanning 159–331 (ADVGLLGFPN…VIKEAARMLK (173 aa)) is the OBG-type G domain. Residues 165-172 (GFPNVGKS), 190-194 (FTTLK), 212-215 (DVPG), 282-285 (NKCD), and 312-314 (SAA) each bind GTP. Residues Ser172 and Thr192 each contribute to the Mg(2+) site. The 84-residue stretch at 345–428 (RFIPEDKKFT…LNDFEFEYLL (84 aa)) folds into the OCT domain.

The protein belongs to the TRAFAC class OBG-HflX-like GTPase superfamily. OBG GTPase family. As to quaternary structure, monomer. Mg(2+) serves as cofactor.

It localises to the cytoplasm. In terms of biological role, an essential GTPase which binds GTP, GDP and possibly (p)ppGpp with moderate affinity, with high nucleotide exchange rates and a fairly low GTP hydrolysis rate. Plays a role in control of the cell cycle, stress response, ribosome biogenesis and in those bacteria that undergo differentiation, in morphogenesis control. This chain is GTPase Obg, found in Clostridium perfringens (strain ATCC 13124 / DSM 756 / JCM 1290 / NCIMB 6125 / NCTC 8237 / Type A).